Consider the following 200-residue polypeptide: Peptidyl-tRNA hydrolase (200 aa).

Tyrosine 15 contacts tRNA. The Proton acceptor role is filled by histidine 20. Residues tyrosine 66, asparagine 68, and asparagine 114 each coordinate tRNA.

This sequence belongs to the PTH family. In terms of assembly, monomer.

Its subcellular location is the cytoplasm. The enzyme catalyses an N-acyl-L-alpha-aminoacyl-tRNA + H2O = an N-acyl-L-amino acid + a tRNA + H(+). Hydrolyzes ribosome-free peptidyl-tRNAs (with 1 or more amino acids incorporated), which drop off the ribosome during protein synthesis, or as a result of ribosome stalling. Its function is as follows. Catalyzes the release of premature peptidyl moieties from peptidyl-tRNA molecules trapped in stalled 50S ribosomal subunits, and thus maintains levels of free tRNAs and 50S ribosomes. The sequence is that of Peptidyl-tRNA hydrolase from Paraburkholderia phytofirmans (strain DSM 17436 / LMG 22146 / PsJN) (Burkholderia phytofirmans).